Here is a 1043-residue protein sequence, read N- to C-terminus: Protein translocase subunit SecA (1043 aa).

Residues glutamine 143, 161–165 (GEGKT), and aspartate 665 contribute to the ATP site. Positions 980–1005 (ATAAPAAETTTTAKAADAARQQPPAA) are enriched in low complexity. A disordered region spans residues 980 to 1043 (ATAAPAAETT…KYKHCHGRNA (64 aa)). Residues 1008 to 1022 (EEQKRQPVHVEKTPG) show a composition bias toward basic and acidic residues. Residues cysteine 1027, cysteine 1029, cysteine 1038, and histidine 1039 each coordinate Zn(2+). Basic residues predominate over residues 1033-1043 (KKYKHCHGRNA).

The protein belongs to the SecA family. Monomer and homodimer. Part of the essential Sec protein translocation apparatus which comprises SecA, SecYEG and auxiliary proteins SecDF. Other proteins may also be involved. Zn(2+) is required as a cofactor.

Its subcellular location is the cell inner membrane. The protein localises to the cytoplasm. It carries out the reaction ATP + H2O + cellular proteinSide 1 = ADP + phosphate + cellular proteinSide 2.. Part of the Sec protein translocase complex. Interacts with the SecYEG preprotein conducting channel. Has a central role in coupling the hydrolysis of ATP to the transfer of proteins into and across the cell membrane, serving as an ATP-driven molecular motor driving the stepwise translocation of polypeptide chains across the membrane. This chain is Protein translocase subunit SecA, found in Chloroherpeton thalassium (strain ATCC 35110 / GB-78).